Here is a 155-residue protein sequence, read N- to C-terminus: Small ribosomal subunit protein uS7cz/uS7cy (155 aa).

Belongs to the universal ribosomal protein uS7 family. Part of the 30S ribosomal subunit.

The protein localises to the plastid. Its subcellular location is the chloroplast. Functionally, one of the primary rRNA binding proteins, it binds directly to 16S rRNA where it nucleates assembly of the head domain of the 30S subunit. This Angiopteris evecta (Mule's foot fern) protein is Small ribosomal subunit protein uS7cz/uS7cy (rps7-A).